A 179-amino-acid polypeptide reads, in one-letter code: NAD(P)H-quinone oxidoreductase subunit I, chloroplastic (179 aa).

4Fe-4S ferredoxin-type domains are found at residues 55-84 (GRIH…VDWR) and 95-124 (LNYS…MTEE). Residues cysteine 64, cysteine 67, cysteine 70, cysteine 74, cysteine 104, cysteine 107, cysteine 110, and cysteine 114 each contribute to the [4Fe-4S] cluster site.

Belongs to the complex I 23 kDa subunit family. NDH is composed of at least 16 different subunits, 5 of which are encoded in the nucleus. Requires [4Fe-4S] cluster as cofactor.

It localises to the plastid. The protein resides in the chloroplast thylakoid membrane. It carries out the reaction a plastoquinone + NADH + (n+1) H(+)(in) = a plastoquinol + NAD(+) + n H(+)(out). It catalyses the reaction a plastoquinone + NADPH + (n+1) H(+)(in) = a plastoquinol + NADP(+) + n H(+)(out). In terms of biological role, NDH shuttles electrons from NAD(P)H:plastoquinone, via FMN and iron-sulfur (Fe-S) centers, to quinones in the photosynthetic chain and possibly in a chloroplast respiratory chain. The immediate electron acceptor for the enzyme in this species is believed to be plastoquinone. Couples the redox reaction to proton translocation, and thus conserves the redox energy in a proton gradient. The chain is NAD(P)H-quinone oxidoreductase subunit I, chloroplastic from Nymphaea alba (White water-lily).